We begin with the raw amino-acid sequence, 760 residues long: Xaa-Pro dipeptidyl-peptidase (760 aa).

Active-site charge relay system residues include serine 349, aspartate 469, and histidine 499.

It belongs to the peptidase S15 family. Homodimer.

Its subcellular location is the cytoplasm. The enzyme catalyses Hydrolyzes Xaa-Pro-|- bonds to release unblocked, N-terminal dipeptides from substrates including Ala-Pro-|-p-nitroanilide and (sequentially) Tyr-Pro-|-Phe-Pro-|-Gly-Pro-|-Ile.. Functionally, removes N-terminal dipeptides sequentially from polypeptides having unsubstituted N-termini provided that the penultimate residue is proline. The polypeptide is Xaa-Pro dipeptidyl-peptidase (Streptococcus pyogenes serotype M3 (strain ATCC BAA-595 / MGAS315)).